The primary structure comprises 504 residues: Signal recognition particle subunit SRP54 (504 aa).

Residues 1–295 (MVLADLGRKI…KTQPFISKLL (295 aa)) form an NG domain region. GTP is bound by residues 108–115 (GLQGSGKT), 190–194 (DTSGR), and 248–251 (TKLD). An M-domain region spans residues 296 to 504 (GMGDIEGLID…MKGMMGFNNM (209 aa)).

This sequence belongs to the GTP-binding SRP family. SRP54 subfamily. Component of a signal recognition particle (SRP) complex that consists of a 7SL RNA molecule of 300 nucleotides and six protein subunits: SRP72, SRP68, SRP54, SRP19, SRP14 and SRP9. Interacts with RNPS1. Interacts with the SRP receptor subunit SRPRA.

It localises to the nucleus speckle. The protein localises to the cytoplasm. It is found in the endoplasmic reticulum. The catalysed reaction is GTP + H2O = GDP + phosphate + H(+). Functionally, component of the signal recognition particle (SRP) complex, a ribonucleoprotein complex that mediates the cotranslational targeting of secretory and membrane proteins to the endoplasmic reticulum (ER). As part of the SRP complex, associates with the SRP receptor (SR) component SRPRA to target secretory proteins to the endoplasmic reticulum membrane. Binds to the signal sequence of presecretory proteins when they emerge from the ribosomes. Displays basal GTPase activity, and stimulates reciprocal GTPase activation of the SR subunit SRPRA. Forms a guanosine 5'-triphosphate (GTP)-dependent complex with the SR subunit SRPRA. SR compaction and GTPase mediated rearrangement of SR drive SRP-mediated cotranslational protein translocation into the ER. Requires the presence of SRP9/SRP14 and/or SRP19 to stably interact with RNA. Plays a role in proliferation and differentiation of granulocytic cells, neutrophils migration capacity and exocrine pancreas development. The sequence is that of Signal recognition particle subunit SRP54 from Homo sapiens (Human).